We begin with the raw amino-acid sequence, 75 residues long: Acyl carrier protein (75 aa).

The 74-residue stretch at 1–74 (MLDKVKEIIV…DVINYIEANK (74 aa)) folds into the Carrier domain. At Ser34 the chain carries O-(pantetheine 4'-phosphoryl)serine.

The protein belongs to the acyl carrier protein (ACP) family. 4'-phosphopantetheine is transferred from CoA to a specific serine of apo-ACP by AcpS. This modification is essential for activity because fatty acids are bound in thioester linkage to the sulfhydryl of the prosthetic group.

The protein localises to the cytoplasm. It functions in the pathway lipid metabolism; fatty acid biosynthesis. Its function is as follows. Carrier of the growing fatty acid chain in fatty acid biosynthesis. The sequence is that of Acyl carrier protein from Fusobacterium nucleatum subsp. nucleatum (strain ATCC 25586 / DSM 15643 / BCRC 10681 / CIP 101130 / JCM 8532 / KCTC 2640 / LMG 13131 / VPI 4355).